The following is a 201-amino-acid chain: Probable nicotinate-nucleotide adenylyltransferase (201 aa).

The protein belongs to the NadD family.

It carries out the reaction nicotinate beta-D-ribonucleotide + ATP + H(+) = deamido-NAD(+) + diphosphate. Its pathway is cofactor biosynthesis; NAD(+) biosynthesis; deamido-NAD(+) from nicotinate D-ribonucleotide: step 1/1. Functionally, catalyzes the reversible adenylation of nicotinate mononucleotide (NaMN) to nicotinic acid adenine dinucleotide (NaAD). This is Probable nicotinate-nucleotide adenylyltransferase from Carboxydothermus hydrogenoformans (strain ATCC BAA-161 / DSM 6008 / Z-2901).